The primary structure comprises 532 residues: uncharacterized protein (532 aa).

6 consecutive transmembrane segments (helical) span residues 7 to 26, 30 to 52, 59 to 77, 87 to 109, 116 to 134, and 139 to 161; these read HSSY…LGRI, GLSL…GVII, FGLV…PGFF, LIII…KYAF, VVGL…AVAI, and SPLA…ILFV. RCK C-terminal domains are found at residues 179 to 262 and 263 to 346; these read LEIE…LVGE and REEG…LLGN. 4 helical membrane-spanning segments follow: residues 356 to 378, 388 to 410, 446 to 468, and 509 to 531; these read FFPI…SFPG, GGVL…LWSM, GLLL…AFVG, and YATV…ATVV.

It belongs to the AAE transporter (TC 2.A.81) family.

Its subcellular location is the cell membrane. This is an uncharacterized protein from Bacteroides fragilis (strain YCH46).